Here is a 355-residue protein sequence, read N- to C-terminus: MRNKKTLVVMAGGTGGHVFPGLAVADALKEQGWAVSWLGTADRMEAQLVPKHGYEIDFIDIAGIRGNGLKRLLMAPIRIIKSIWQARSVLKKRRVDLVLGMGGFASGPGGIAAWSMGIPVILHEQNAVAGLTNRILSLFSKRVLMGFSGAFKSGKAILVGNPVRKQLVDLPVKKISSEDVALKVLVVGGSLGAKVLNDLLPAVFSSFDNENFNIMHQSGEGHYQAVQKGYEQRLVKANVQEFITDMASAYDWADLVICRAGALTVAELAVVGLPAIFVPLPHAVDDHQTKNAQYLVSQEAAVLIAQKELTAKKISDYLRLFLQNRKLLTAMSQKSRKAAIIDATESVASICNQLV.

UDP-N-acetyl-alpha-D-glucosamine-binding positions include 14–16, Asn126, Arg164, Ser190, Ile243, 262–267, and Gln288; these read TGG and ALTVAE.

This sequence belongs to the glycosyltransferase 28 family. MurG subfamily.

The protein localises to the cell inner membrane. It catalyses the reaction di-trans,octa-cis-undecaprenyl diphospho-N-acetyl-alpha-D-muramoyl-L-alanyl-D-glutamyl-meso-2,6-diaminopimeloyl-D-alanyl-D-alanine + UDP-N-acetyl-alpha-D-glucosamine = di-trans,octa-cis-undecaprenyl diphospho-[N-acetyl-alpha-D-glucosaminyl-(1-&gt;4)]-N-acetyl-alpha-D-muramoyl-L-alanyl-D-glutamyl-meso-2,6-diaminopimeloyl-D-alanyl-D-alanine + UDP + H(+). It participates in cell wall biogenesis; peptidoglycan biosynthesis. Cell wall formation. Catalyzes the transfer of a GlcNAc subunit on undecaprenyl-pyrophosphoryl-MurNAc-pentapeptide (lipid intermediate I) to form undecaprenyl-pyrophosphoryl-MurNAc-(pentapeptide)GlcNAc (lipid intermediate II). In Psychromonas ingrahamii (strain DSM 17664 / CCUG 51855 / 37), this protein is UDP-N-acetylglucosamine--N-acetylmuramyl-(pentapeptide) pyrophosphoryl-undecaprenol N-acetylglucosamine transferase.